A 356-amino-acid polypeptide reads, in one-letter code: 7,8-didemethyl-8-hydroxy-5-deazariboflavin synthase (356 aa).

One can recognise a Radical SAM core domain in the interval 40 to 280 (ITYSKNVFIP…KDISIQVPPN (241 aa)). Residues cysteine 54, cysteine 58, and cysteine 61 each coordinate [4Fe-4S] cluster.

It belongs to the radical SAM superfamily. CofG family. Consists of two subunits, CofG and CofH. It depends on [4Fe-4S] cluster as a cofactor.

It carries out the reaction 5-amino-5-(4-hydroxybenzyl)-6-(D-ribitylimino)-5,6-dihydrouracil + S-adenosyl-L-methionine = 7,8-didemethyl-8-hydroxy-5-deazariboflavin + 5'-deoxyadenosine + L-methionine + NH4(+) + H(+). Its pathway is cofactor biosynthesis; coenzyme F0 biosynthesis. Its function is as follows. Catalyzes the radical-mediated synthesis of 7,8-didemethyl-8-hydroxy-5-deazariboflavin from 5-amino-5-(4-hydroxybenzyl)-6-(D-ribitylimino)-5,6-dihydrouracil. The polypeptide is 7,8-didemethyl-8-hydroxy-5-deazariboflavin synthase (Methanococcus aeolicus (strain ATCC BAA-1280 / DSM 17508 / OCM 812 / Nankai-3)).